The primary structure comprises 1416 residues: Phospholipid-transporting ATPase VD (1416 aa).

Topologically, residues 1–97 (MTELLQWARH…PRNLFEQFHR (97 aa)) are cytoplasmic. Residues 98–118 (AANLYFLFLVVLNWVPLVEAF) traverse the membrane as a helical segment. At 119 to 120 (QK) the chain is on the exoplasmic loop side. The helical transmembrane segment at 121 to 141 (EITMLPLVVVLTIIAIKDGLE) threads the bilayer. Residues 142–321 (DYRKYKIDKQ…SKLERRANTD (180 aa)) lie on the Cytoplasmic side of the membrane. A helical membrane pass occupies residues 322–342 (VLWCVLLLIVMCLTGALGHGI). Residues 343 to 365 (WLSRYENMLFFNIPEPDGRVISP) are Exoplasmic loop-facing. A helical transmembrane segment spans residues 366–386 (VLTGFYVFWTMIILLQVLIPI). Topologically, residues 387-1110 (SLYVSIEIVK…HWCYTRLSNM (724 aa)) are cytoplasmic. Residue Asp-438 is the 4-aspartylphosphate intermediate of the active site. Residues Asp-438, Lys-439, and Thr-440 each contribute to the ATP site. Position 438 (Asp-438) interacts with Mg(2+). Thr-440 serves as a coordination point for Mg(2+). A disordered region spans residues 498–544 (AQGCRTVPSGPLGKPSAQLSGSTSAVGNGEGSGEVPHSRQAAFSSPM). A compositionally biased stretch (polar residues) spans 514–523 (AQLSGSTSAV). Residues Glu-729, Phe-771, Lys-795, Arg-838, Thr-918, Gly-919, and Asp-920 each coordinate ATP. Residues 971–990 (PELASSRKNFPQPSDAQGQG) are disordered. The segment covering 976 to 987 (SRKNFPQPSDAQ) has biased composition (polar residues). ATP-binding positions include 993 to 1000 (GLVITGKT), Arg-1027, and Lys-1033. Position 1053 (Asp-1053) interacts with Mg(2+). The ATP site is built by Asn-1056 and Asp-1057. Residue Asp-1057 coordinates Mg(2+). A helical transmembrane segment spans residues 1111–1131 (ILYFFYKNVAYVNLLFWYQFF). Over 1132-1142 (CGFSGTSMTDY) the chain is Exoplasmic loop. A helical membrane pass occupies residues 1143–1163 (WVLIFFNLLFTSVPPIIYGVL). Topologically, residues 1164–1192 (EKDVSAETLLQLPELYRSGQRSEEYLPLT) are cytoplasmic. A helical membrane pass occupies residues 1193–1213 (FWITLLDAFYQSLVCFFVPYF). The Exoplasmic loop segment spans residues 1214–1221 (TYQGSDID). The chain crosses the membrane as a helical span at residues 1222-1242 (IFTFGNPLNTAALFIILLHLV). Residues 1243 to 1252 (IESKSLTWIH) are Cytoplasmic-facing. Residues 1253 to 1273 (MLVTVGSILSYFFFALAFGAL) traverse the membrane as a helical segment. The Exoplasmic loop portion of the chain corresponds to 1274–1289 (CVTCNPPSNPYGIMRK). A helical transmembrane segment spans residues 1290 to 1310 (HMLDPVFYLVCVLTTFVALLP). Topologically, residues 1311–1416 (RFLYRVLQGS…ASKMTGSSAS (106 aa)) are cytoplasmic. The interval 1358–1416 (SKHASQSAAMSGRPTPGSSAVLAMKSATVSTVEQSTRETALDRGCSEPGASKMTGSSAS) is disordered. 1361 to 1368 (ASQSAAMS) serves as a coordination point for ATP. A compositionally biased stretch (basic and acidic residues) spans 1392–1402 (STRETALDRGC).

This sequence belongs to the cation transport ATPase (P-type) (TC 3.A.3) family. Type IV subfamily. In terms of assembly, component of a P4-ATPase flippase complex which consists of a catalytic alpha subunit ATP10A and an accessory beta subunit TMEM30A. It depends on Mg(2+) as a cofactor. In terms of processing, autophosphorylated at the conserved aspartate of the P-type ATPase signature sequence. As to expression, expressed at low amounts in liver, brain, testes, and kidney (at protein level). Expressed in placenta.

It localises to the cell membrane. The protein resides in the endoplasmic reticulum membrane. The catalysed reaction is ATP + H2O + phospholipidSide 1 = ADP + phosphate + phospholipidSide 2.. It carries out the reaction a beta-D-glucosyl-(1&lt;-&gt;1')-N-acylsphing-4-enine(out) + ATP + H2O = a beta-D-glucosyl-(1&lt;-&gt;1')-N-acylsphing-4-enine(in) + ADP + phosphate + H(+). In terms of biological role, catalytic component of a P4-ATPase flippase complex, which catalyzes the hydrolysis of ATP coupled to the transport of glucosylceramide (GlcCer) from the outer to the inner leaflet of the plasma membrane. The chain is Phospholipid-transporting ATPase VD (Atp10d) from Mus musculus (Mouse).